Consider the following 151-residue polypeptide: Allatostatin-A (151 aa).

A signal peptide spans 1 to 21 (MNSLHAHLLLLAVCCVGYIAS). Residues 22 to 54 (SPVIGQDQRSGDSDADVLLAADEMADNGGDNID) constitute a propeptide that is removed on maturation. Leucine amide occurs at positions 64, 88, and 99. The propeptide occupies 103–135 (SDYDYDQDNEIDYRVPPANYLAAERAVRPGRQN). Residues 131–151 (PGRQNKRTTRPQPFNFGLGRR) are disordered. Residue Leu-148 is modified to Leucine amide.

Belongs to the allatostatin family.

Its subcellular location is the secreted. Its function is as follows. May act as a neurotransmitter or neuromodulator. This Drosophila melanogaster (Fruit fly) protein is Allatostatin-A (AstA).